The chain runs to 773 residues: 4'-phosphopantetheine phosphatase (773 aa).

An N-acetylalanine modification is found at A2. Residues 2 to 402 (AECRASGGGS…APELCPTQRA (401 aa)) form a pantothenate kinase region. Acetyl-CoA is bound by residues S196 and S199. Y320 carries the 3'-nitrotyrosine modification. Residues 403–773 (RSGTFDLLEM…VIFKYEVPAE (371 aa)) are 4'-phosphopantetheine phosphatase. The residue at position 404 (S404) is a Phosphoserine. T406 is subject to Phosphothreonine. Residues D623, N624, and D659 each contribute to the Mn(2+) site. The short motif at 724–728 (EGMGR) is the Subfamily II EGMGR motif element.

In the N-terminal section; belongs to the type II pantothenate kinase family. This sequence in the C-terminal section; belongs to the damage-control phosphatase family. Phosphopantetheine phosphatase (II) subfamily. As to quaternary structure, homodimer. Interacts with PKM. Mn(2+) is required as a cofactor. It depends on Ni(2+) as a cofactor.

The protein localises to the cytoplasm. It carries out the reaction (R)-4'-phosphopantetheine + H2O = (R)-pantetheine + phosphate. The catalysed reaction is (R)-4'-phosphopantetheine sulfonate + H2O = (R)-pantetheine sulfonate + phosphate. It catalyses the reaction (R)-4'-phospho-S-sulfopantetheine + H2O = (R)-S-sulfopantetheine + phosphate. With respect to regulation, activity is strongly promoted by Co(2+), Ni(2+), Mg(2+) and Mn(2+). Activity is inhibited by EDTA. Its function is as follows. Phosphatase which shows a preference for 4'-phosphopantetheine and its oxidatively damaged forms (sulfonate or S-sulfonate), providing strong indirect evidence that the phosphatase activity pre-empts damage in the coenzyme A (CoA) pathway. Hydrolyzing excess 4'-phosphopantetheine could constitute a directed overflow mechanism to prevent its oxidation to the S-sulfonate, sulfonate, or other forms. Hydrolyzing 4'-phosphopantetheine sulfonate or S-sulfonate would forestall their conversion to inactive forms of CoA and acyl carrier protein. May play a role in the physiological regulation of CoA intracellular levels. This is 4'-phosphopantetheine phosphatase from Rattus norvegicus (Rat).